Here is an 86-residue protein sequence, read N- to C-terminus: Large ribosomal subunit protein bL31B (86 aa).

Belongs to the bacterial ribosomal protein bL31 family. Type B subfamily. In terms of assembly, part of the 50S ribosomal subunit.

The chain is Large ribosomal subunit protein bL31B from Chloroherpeton thalassium (strain ATCC 35110 / GB-78).